Reading from the N-terminus, the 73-residue chain is MEHWGQPIPGAGQPWRQPLPTSGRWWLGAASWWWLGAASWWWLGAAPWWWLGTASWWWLGSRRWHPQSVEQAE.

Residues 32–52 traverse the membrane as a helical segment; the sequence is WWWLGAASWWWLGAAPWWWLG.

As to expression, detected in brain homogenate, primary neurons, and peripheral blood mononuclear cells (at protein level).

It is found in the mitochondrion outer membrane. This Homo sapiens (Human) protein is Alternative prion protein (PRNP).